A 750-amino-acid polypeptide reads, in one-letter code: Small G protein signaling modulator 3 (750 aa).

One can recognise a Rab-GAP TBC domain in the interval 114–305 (GIPHGMRPQL…RIWDLFFYEG (192 aa)). A Phosphoserine modification is found at serine 406. Positions 415–439 (EDDLEALKAKNIKQTELVADLREAI) form a coiled coil. The region spanning 480-539 (SHRRRAKALLDFERHDDDELGFRKNDIITIISQKDEHCWVGELNGLRGWFPAKFVEVLDE) is the SH3 domain. The 164-residue stretch at 555-718 (GVTDLVRGTL…FAFSLSQDWE (164 aa)) folds into the RUN domain.

The protein belongs to the small G protein signaling modulator family. As to quaternary structure, interacts with GJA1. Interaction with GJA1 induces its degradation. Interacts via its RUN domain with the C-terminal region of NF2. Interacts with RAB3A, RAB4A, RAB5A, RAB8A, RAB11A, RAP1A, RAP1B, RAP2A, RAP2B and PDCD6I. No interaction with RAB27A. As to expression, widely expressed.

Its subcellular location is the cytoplasm. May play a cooperative role in NF2-mediated growth suppression of cells. This is Small G protein signaling modulator 3 from Mus musculus (Mouse).